Consider the following 329-residue polypeptide: Ketol-acid reductoisomerase (NADP(+)) (329 aa).

One can recognise a KARI N-terminal Rossmann domain in the interval 2–182 (TQLFYDTDAD…GGTRAGILET (181 aa)). NADP(+) contacts are provided by residues 25 to 28 (YGSQ), serine 51, serine 53, and 83 to 86 (DEFQ). Histidine 108 is an active-site residue. Glycine 134 contacts NADP(+). Residues 183-328 (NFKEETETDL…KSLRSMFSWL (146 aa)) form the KARI C-terminal knotted domain. 4 residues coordinate Mg(2+): aspartate 191, glutamate 195, glutamate 227, and glutamate 231. Position 252 (serine 252) interacts with substrate.

It belongs to the ketol-acid reductoisomerase family. It depends on Mg(2+) as a cofactor.

It catalyses the reaction (2R)-2,3-dihydroxy-3-methylbutanoate + NADP(+) = (2S)-2-acetolactate + NADPH + H(+). The catalysed reaction is (2R,3R)-2,3-dihydroxy-3-methylpentanoate + NADP(+) = (S)-2-ethyl-2-hydroxy-3-oxobutanoate + NADPH + H(+). The protein operates within amino-acid biosynthesis; L-isoleucine biosynthesis; L-isoleucine from 2-oxobutanoate: step 2/4. It functions in the pathway amino-acid biosynthesis; L-valine biosynthesis; L-valine from pyruvate: step 2/4. Its function is as follows. Involved in the biosynthesis of branched-chain amino acids (BCAA). Catalyzes an alkyl-migration followed by a ketol-acid reduction of (S)-2-acetolactate (S2AL) to yield (R)-2,3-dihydroxy-isovalerate. In the isomerase reaction, S2AL is rearranged via a Mg-dependent methyl migration to produce 3-hydroxy-3-methyl-2-ketobutyrate (HMKB). In the reductase reaction, this 2-ketoacid undergoes a metal-dependent reduction by NADPH to yield (R)-2,3-dihydroxy-isovalerate. The protein is Ketol-acid reductoisomerase (NADP(+)) of Prochlorococcus marinus (strain MIT 9301).